The sequence spans 109 residues: Large ribosomal subunit protein uL22 (109 aa).

This sequence belongs to the universal ribosomal protein uL22 family. As to quaternary structure, part of the 50S ribosomal subunit.

This protein binds specifically to 23S rRNA; its binding is stimulated by other ribosomal proteins, e.g. L4, L17, and L20. It is important during the early stages of 50S assembly. It makes multiple contacts with different domains of the 23S rRNA in the assembled 50S subunit and ribosome. Functionally, the globular domain of the protein is located near the polypeptide exit tunnel on the outside of the subunit, while an extended beta-hairpin is found that lines the wall of the exit tunnel in the center of the 70S ribosome. This Paraburkholderia phymatum (strain DSM 17167 / CIP 108236 / LMG 21445 / STM815) (Burkholderia phymatum) protein is Large ribosomal subunit protein uL22.